The following is a 557-amino-acid chain: TWiK family of potassium channels protein 7 (557 aa).

Disordered regions lie at residues 1–34 and 128–151; these read MTSS…EALL and DKSG…EEEE. At 1–165 the chain is on the cytoplasmic side; sequence MTSSSRGYQR…RKFAKLVLPH (165 aa). A compositionally biased stretch (acidic residues) spans 134 to 151; the sequence is DIDDESDDESKDEDEEEE. A helical transmembrane segment spans residues 166 to 186; sequence VALVLLTCTYTVIGALIFYSV. Asparagine 220 and asparagine 237 each carry an N-linked (GlcNAc...) asparagine glycan. An intramembrane region (pore-forming) is located at residues 270–290; sequence SIFFAVTVVTTIGYGNPVPVT. A helical transmembrane segment spans residues 295–315; the sequence is IWCILFSLLGIPLTLVTIADL. At 316–368 the chain is on the cytoplasmic side; that stretch reads GKFLSEHLVWLYGNYLKLKYLILSRHRKERREHVCEHCHSHGMGHDMNIEEKR. A helical membrane pass occupies residues 369-389; sequence IPAFLVLAILIVYTAFGGVLM. The segment at residues 397–417 is an intramembrane region (pore-forming); it reads FFTSFYWSFITMTTVGFGDLM. The chain crosses the membrane as a helical span at residues 426-446; the sequence is IILLYIILGLAITTMCIDLVG. Topologically, residues 447–557 are cytoplasmic; the sequence is VQYIRKIHYF…SRYSLNRAFK (111 aa).

The protein belongs to the two pore domain potassium channel (TC 1.A.1.8) family.

It is found in the membrane. The protein is TWiK family of potassium channels protein 7 (twk-7) of Caenorhabditis elegans.